The primary structure comprises 162 residues: tRNA (cytidine(34)-2'-O)-methyltransferase (162 aa).

4 residues coordinate S-adenosyl-L-methionine: Leu-80, Gly-102, Leu-124, and Ser-132.

It belongs to the class IV-like SAM-binding methyltransferase superfamily. RNA methyltransferase TrmH family. TrmL subfamily. Homodimer.

The protein resides in the cytoplasm. The enzyme catalyses cytidine(34) in tRNA + S-adenosyl-L-methionine = 2'-O-methylcytidine(34) in tRNA + S-adenosyl-L-homocysteine + H(+). The catalysed reaction is 5-carboxymethylaminomethyluridine(34) in tRNA(Leu) + S-adenosyl-L-methionine = 5-carboxymethylaminomethyl-2'-O-methyluridine(34) in tRNA(Leu) + S-adenosyl-L-homocysteine + H(+). Its function is as follows. Methylates the ribose at the nucleotide 34 wobble position in the two leucyl isoacceptors tRNA(Leu)(CmAA) and tRNA(Leu)(cmnm5UmAA). Catalyzes the methyl transfer from S-adenosyl-L-methionine to the 2'-OH of the wobble nucleotide. The chain is tRNA (cytidine(34)-2'-O)-methyltransferase from Acidovorax sp. (strain JS42).